The primary structure comprises 496 residues: Probable cytosol aminopeptidase (496 aa).

Positions 262 and 267 each coordinate Mn(2+). The active site involves K274. Residues D285, D344, and E346 each contribute to the Mn(2+) site. R348 is an active-site residue.

It belongs to the peptidase M17 family. The cofactor is Mn(2+).

Its subcellular location is the cytoplasm. The catalysed reaction is Release of an N-terminal amino acid, Xaa-|-Yaa-, in which Xaa is preferably Leu, but may be other amino acids including Pro although not Arg or Lys, and Yaa may be Pro. Amino acid amides and methyl esters are also readily hydrolyzed, but rates on arylamides are exceedingly low.. It carries out the reaction Release of an N-terminal amino acid, preferentially leucine, but not glutamic or aspartic acids.. Its function is as follows. Presumably involved in the processing and regular turnover of intracellular proteins. Catalyzes the removal of unsubstituted N-terminal amino acids from various peptides. This Rhizobium johnstonii (strain DSM 114642 / LMG 32736 / 3841) (Rhizobium leguminosarum bv. viciae) protein is Probable cytosol aminopeptidase.